Here is a 466-residue protein sequence, read N- to C-terminus: Fumarate hydratase class II (466 aa).

Residues 100-102 (SGT), Arg128, 131-134 (HPND), 141-143 (SSN), and Thr189 contribute to the substrate site. The span at 122–137 (GERGERRKVHPNDDVN) shows a compositional bias: basic and acidic residues. The interval 122–143 (GERGERRKVHPNDDVNKGQSSN) is disordered. Residue His190 is the Proton donor/acceptor of the active site. Ser320 is a catalytic residue. Substrate contacts are provided by residues Ser321 and 326-328 (KVN).

It belongs to the class-II fumarase/aspartase family. Fumarase subfamily. As to quaternary structure, homotetramer.

The protein localises to the cytoplasm. It carries out the reaction (S)-malate = fumarate + H2O. The protein operates within carbohydrate metabolism; tricarboxylic acid cycle; (S)-malate from fumarate: step 1/1. Its function is as follows. Involved in the TCA cycle. Catalyzes the stereospecific interconversion of fumarate to L-malate. The sequence is that of Fumarate hydratase class II from Myxococcus xanthus (strain DK1622).